The primary structure comprises 609 residues: MASFNATEFLKNLSSSAGVYRMYDAKGEVIYVGKAKDLKKRLSSYFRANLGNIKTQALVSHITNIDVTLTHSETDALLLENDYIKQYMPKYNVLLRDDKSYPYLFLSGHKHPRLAYHRGPQREKGRYFGPYPNGGAVRESLNLLQKLFPIRQCDDLYYKARTRPCLQYQLGRCSAPCVNKVTDEDYAEQVQLASLFLQGKDQQVVTNLVTKMEQAAEEFHYEQAAAYRDQITALRKVAEQQEVSLDKGDMDVIGVHYEKAIACFHMLFIRSGKIFGSRSYYPSVPAQTDIDEVLSAFISQFYLNADVQRTLPNEVILSQSFSDKAELESAIAEALEKKFIIKTQVRGERASFLRLALTNATNAVTTRLADKNTQEQRFSLLEEALELGHSIGRMECFDISHTMGESTVASCVVFNREGPHKADYRRYNISGITGGDDYAAMEQAINRRFDKIDTNGKVPDIVFIDGGLGQLRIAQGIVDEKCAHLDRPPLLIGVTKGEGRKAGLETFVFGGSEQQFNLPSDSGAFHLILHIRDESHRFAITGHRNKRQKTRNTSSLESIAGVGPKRRKALLQHLGGLQEVKGASVAELTKVPGISLEMAQTIHDALRGG.

The GIY-YIG domain maps to 15–93; it reads SSAGVYRMYD…IKQYMPKYNV (79 aa). The 36-residue stretch at 202–237 folds into the UVR domain; the sequence is QQVVTNLVTKMEQAAEEFHYEQAAAYRDQITALRKV.

Belongs to the UvrC family. As to quaternary structure, interacts with UvrB in an incision complex.

The protein localises to the cytoplasm. In terms of biological role, the UvrABC repair system catalyzes the recognition and processing of DNA lesions. UvrC both incises the 5' and 3' sides of the lesion. The N-terminal half is responsible for the 3' incision and the C-terminal half is responsible for the 5' incision. The polypeptide is UvrABC system protein C (Shewanella denitrificans (strain OS217 / ATCC BAA-1090 / DSM 15013)).